A 460-amino-acid polypeptide reads, in one-letter code: Putative 2,3-dihydroxypropane-1-sulfonate exporter (460 aa).

Topologically, residues 1-18 (MSQTSSNPATLRLPFKEK) are cytoplasmic. The chain crosses the membrane as a helical span at residues 19–39 (LAYGLGDLGSNILLDIGTLYL). Residues 40-46 (LKFYTDV) are Periplasmic-facing. A helical transmembrane segment spans residues 47–67 (LGLPGTYGGIIFLIAKFFTAF). Topologically, residues 68 to 91 (TDMGTGIMLDSRRKIGPKGKFRPF) are cytoplasmic. The chain crosses the membrane as a helical span at residues 92–112 (VLYAAFPVTLLAIANFVGTPF). Residues 113-122 (EVTGKTVVAT) lie on the Periplasmic side of the membrane. Residues 123–143 (MLFMLYGLVFSMMNCSYGAMV) traverse the membrane as a helical segment. The Cytoplasmic segment spans residues 144 to 161 (PAITKNPDERASLAAWRQ). A helical membrane pass occupies residues 162–182 (GGATLGLLLCTVGFVPVMNLI). The Periplasmic segment spans residues 183–190 (EGNAQLSY). A helical transmembrane segment spans residues 191-211 (IFAATLFSLFGLLFMWLCYAG). Over 212-242 (VKERYVEVKPVDSAQKPGLLQSFRAIAGNRP) the chain is Cytoplasmic. The chain crosses the membrane as a helical span at residues 243–263 (LFILCIANLCTLGAFNVKLAI). Residues 264–275 (QVYYTQYVLNDP) are Periplasmic-facing. The helical transmembrane segment at 276–296 (ILLSWMGFFSMGCIFIGVFLM) threads the bilayer. Over 297 to 307 (PGAVRRFGKKK) the chain is Cytoplasmic. A helical membrane pass occupies residues 308 to 328 (VYIGGLLIWVAGDLLNYFFGG). Residue G329 is a topological domain, periplasmic. The helical transmembrane segment at 330–350 (SVSFVAFSCLAFFGSAFVNSL) threads the bilayer. At 351-386 (NWALVSDTVEYGEWRTGVRSEGTVYTGFTFFRKVSQ) the chain is on the cytoplasmic side. Residues 387–407 (ALAGFFPGWMLTQIGYIPNVV) traverse the membrane as a helical segment. Residues 408–418 (QSAGTVEGLRQ) are Periplasmic-facing. A helical transmembrane segment spans residues 419–439 (LIFIYPCVLAVITIIAMGCFY). Topologically, residues 440 to 460 (NLNEKMYVRIVEEIEARKHTV) are cytoplasmic.

This sequence belongs to the sodium:galactoside symporter (TC 2.A.2) family.

It is found in the cell inner membrane. Could be involved in the export of 2,3-dihydroxypropane-1-sulfonate (DHPS). This chain is Putative 2,3-dihydroxypropane-1-sulfonate exporter (yihP), found in Salmonella typhimurium (strain LT2 / SGSC1412 / ATCC 700720).